A 97-amino-acid chain; its full sequence is Large ribosomal subunit protein uL23 (97 aa).

This sequence belongs to the universal ribosomal protein uL23 family. As to quaternary structure, part of the 50S ribosomal subunit. Contacts protein L29, and trigger factor when it is bound to the ribosome.

Its function is as follows. One of the early assembly proteins it binds 23S rRNA. One of the proteins that surrounds the polypeptide exit tunnel on the outside of the ribosome. Forms the main docking site for trigger factor binding to the ribosome. The chain is Large ribosomal subunit protein uL23 from Sulfurihydrogenibium sp. (strain YO3AOP1).